Here is a 506-residue protein sequence, read N- to C-terminus: Chorion-specific transcription factor GCMb (506 aa).

Positions 19–174 (LSWDINDPQM…KSETEARRSA (156 aa)) form a DNA-binding region, GCM. Cysteine 81, cysteine 87, cysteine 91, cysteine 118, cysteine 121, cysteine 130, histidine 157, and histidine 159 together coordinate Zn(2+). Over residues 155-172 (GVHDHPRPESKSETEARR) the composition is skewed to basic and acidic residues. The interval 155–213 (GVHDHPRPESKSETEARRSAIKRQMASFYQPQKKRIRESEAEENQDSSGHFSNIPPLEN) is disordered. The segment at 379-395 (LQTVITTTTKVSYQAYQ) is C-terminal conserved inhibitory domain (CCID).

It localises to the nucleus. Transcription factor that binds specific sequences on gene promoters and activate their transcription. Through the regulation of gene transcription, may play a role in parathyroid gland development. In Homo sapiens (Human), this protein is Chorion-specific transcription factor GCMb.